Reading from the N-terminus, the 482-residue chain is MKGLFLRIITALALLFWAIDMVFPWQFLRHTEENHYTAIQARGSLYVGTINNQISYFINKDSERGFEYELAKAFADTLGVELEMKIFDNQEQLFDELNKHNIDLAAAHLLYHPKNAERFQIGPAYHSASWQLAYRKNENRPKNLGNVKKDIYISNNLALEETLKELQKQYPQLIWKRNQALTQEELLLQLAEGKIPYVIANSIDIAAIQQIKPELAIAFDITDEANVHWYLPNSPYRDLQTALLNFMNNAEETGLLDNLKEKYLGHISQFDYVDTRSYMNAIENILPQFSPLFEKYKGELDWRLLAAVAYQESHWNPDATSPTGVRGIMMLTKNTAQHMKISDRTDPEQSIKAGSEYLHWLISQLPESIEKEERIWFALVAYNIGLGHLIDARRLTQNLGGNPDNWLNVKKNLPLLAEKRYYSQLKYGYARGYEAYQYVENIRRYMNSIVNYHRVQENQTTNDNANNESAVKNLEEIKENED.

Residues Met1–Ala18 form the signal peptide. The interval Ile19–Ile267 is non-LT domain. Residues Ser268 to Asp482 form an LT domain region. Glu312 is a catalytic residue. Polar residues predominate over residues Glu457–Ala470. The segment at Glu457–Asp482 is disordered. Basic and acidic residues predominate over residues Asn473 to Asp482.

The protein in the N-terminal section; belongs to the bacterial solute-binding protein 3 family. In the C-terminal section; belongs to the transglycosylase Slt family.

It localises to the cell outer membrane. It catalyses the reaction Exolytic cleavage of the (1-&gt;4)-beta-glycosidic linkage between N-acetylmuramic acid (MurNAc) and N-acetylglucosamine (GlcNAc) residues in peptidoglycan, from either the reducing or the non-reducing ends of the peptidoglycan chains, with concomitant formation of a 1,6-anhydrobond in the MurNAc residue.. Functionally, murein-degrading enzyme that degrades murein glycan strands and insoluble, high-molecular weight murein sacculi, with the concomitant formation of a 1,6-anhydromuramoyl product. Lytic transglycosylases (LTs) play an integral role in the metabolism of the peptidoglycan (PG) sacculus. Their lytic action creates space within the PG sacculus to allow for its expansion as well as for the insertion of various structures such as secretion systems and flagella. This chain is Membrane-bound lytic murein transglycosylase F, found in Haemophilus influenzae (strain PittGG).